The sequence spans 97 residues: ORF9b protein (97 aa).

The 9b domain occupies 8 to 97; that stretch reads MHPALRLVDP…PDEFVVVTVK (90 aa). Residues 45 to 53 carry the Nuclear export signal motif; sequence ILRLGSPLS.

Belongs to the coronavirus group 2 protein 9b family. In terms of assembly, homodimer. Interacts with host TOMM70; the interaction occurs only with monomer.

The protein localises to the host cytoplasm. It localises to the host mitochondrion. In terms of biological role, plays a role in inhibiting the host innate immune response by targeting the mitochondrial-associated innate immune response. Acts by binding to host TOMM70, inhibiting its binding to HSP90AB1 thereby disrupting the interferon activation pathway. In Homo sapiens (Human), this protein is ORF9b protein.